Reading from the N-terminus, the 541-residue chain is Glucose-6-phosphate isomerase (541 aa).

The active-site Proton donor is the Glu346. Residues His377 and Lys506 contribute to the active site.

Belongs to the GPI family.

The protein localises to the cytoplasm. It catalyses the reaction alpha-D-glucose 6-phosphate = beta-D-fructose 6-phosphate. It participates in carbohydrate biosynthesis; gluconeogenesis. The protein operates within carbohydrate degradation; glycolysis; D-glyceraldehyde 3-phosphate and glycerone phosphate from D-glucose: step 2/4. Functionally, catalyzes the reversible isomerization of glucose-6-phosphate to fructose-6-phosphate. The protein is Glucose-6-phosphate isomerase of Rhizobium etli (strain ATCC 51251 / DSM 11541 / JCM 21823 / NBRC 15573 / CFN 42).